The chain runs to 163 residues: NADH-quinone oxidoreductase subunit I (163 aa).

4Fe-4S ferredoxin-type domains follow at residues 53 to 83 and 94 to 123; these read LRRY…IEAG and VRYD…EGPN. [4Fe-4S] cluster is bound by residues Cys-63, Cys-66, Cys-69, Cys-73, Cys-103, Cys-106, Cys-109, and Cys-113.

This sequence belongs to the complex I 23 kDa subunit family. As to quaternary structure, NDH-1 is composed of 14 different subunits. Subunits NuoA, H, J, K, L, M, N constitute the membrane sector of the complex. [4Fe-4S] cluster is required as a cofactor.

The protein resides in the cell inner membrane. The enzyme catalyses a quinone + NADH + 5 H(+)(in) = a quinol + NAD(+) + 4 H(+)(out). Functionally, NDH-1 shuttles electrons from NADH, via FMN and iron-sulfur (Fe-S) centers, to quinones in the respiratory chain. The immediate electron acceptor for the enzyme in this species is believed to be ubiquinone. Couples the redox reaction to proton translocation (for every two electrons transferred, four hydrogen ions are translocated across the cytoplasmic membrane), and thus conserves the redox energy in a proton gradient. The polypeptide is NADH-quinone oxidoreductase subunit I (Brucella suis (strain ATCC 23445 / NCTC 10510)).